The primary structure comprises 523 residues: Uridylate cyclase (523 aa).

2 consecutive Guanylate cyclase domains span residues 69–209 (VHVY…AKLA) and 318–438 (MSIF…IGIR). 2 residues coordinate a ribonucleoside 5'-triphosphate: Tyr-72 and Arg-125. Mn(2+) contacts are provided by Asp-323, Ile-324, and Asp-372.

This sequence belongs to the adenylyl cyclase class-4/guanylyl cyclase family. Pyrimidine cyclase subfamily. As to quaternary structure, monomer. Requires Mn(2+) as cofactor.

It is found in the cytoplasm. It catalyses the reaction UTP = 3',5'-cyclic UMP + diphosphate. Pycsar (pyrimidine cyclase system for antiphage resistance) provides immunity against bacteriophage. The pyrimidine cyclase (PycC) synthesizes cyclic nucleotides in response to infection; these serve as specific second messenger signals. The signals activate the nearby effector, leading to bacterial cell death and abortive phage infection. A clade A Pycsar system. Functionally, the pyrimidine cyclase gene of a two-gene Pycsar system, generates cyclic UMP (cUMP) from UTP, has little to no activity on ATP, CTP or GTP. Expression of this and effector RsPycTM (AC A0A4R2UGS4) probably confers resistance to some bacteriophage. The genes are probably only expressed in response to bacteriophage infection. This is Uridylate cyclase from Rhizobium sp. (strain PP-F2F-G36).